Reading from the N-terminus, the 937-residue chain is Protocadherin alpha-7 (937 aa).

The signal sequence occupies residues 1-29; it reads MVCPNGYDPGGRHLLLFIIILAAWEAGRG. 6 Cadherin domains span residues 30–133, 134–242, 243–350, 351–455, 456–565, and 581–678; these read QLHY…PPVF, PATQ…APVF, DRTL…APQL, TLTS…APAF, AQPE…APAL, and VPRS…APKA. Residues 30–697 lie on the Extracellular side of the membrane; that stretch reads QLHYSVPEEA…GPETELVDVN (668 aa). Cysteines 96 and 102 form a disulfide. 2 N-linked (GlcNAc...) asparagine glycosylation sites follow: Asn254 and Asn265. N-linked (GlcNAc...) asparagine glycosylation is present at Asn548. Residues 698-718 traverse the membrane as a helical segment; sequence VYLIIAICAVSSLLVLTLLLY. The Cytoplasmic segment spans residues 719–937; it reads TALRCSAPSS…GNSTTDNSDQ (219 aa). Disordered regions lie at residues 755–795 and 814–937; these read RQRV…DWRY and ILRA…NSDQ. PXXP repeat units lie at residues 774 to 777, 786 to 789, 819 to 822, 860 to 863, and 878 to 881; these read PSLP, PRQP, PGGP, PGNP, and PGSP. Residues 774–881 are 5 X 4 AA repeats of P-X-X-P; it reads PSLPQGPSST…PDKFIIPGSP (108 aa). Positions 775–787 are enriched in polar residues; that stretch reads SLPQGPSSTDNPR. Basic and acidic residues predominate over residues 896–910; that stretch reads DKSDFITFGKKEETK.

Forms homodimers in trans (molecules expressed by two different cells). Forms promiscuous heterodimers in cis (at the plasma membrane of the same cell) with other protocadherins.

The protein localises to the cell membrane. Functionally, calcium-dependent cell-adhesion protein involved in cells self-recognition and non-self discrimination. Thereby, it is involved in the establishment and maintenance of specific neuronal connections in the brain. The polypeptide is Protocadherin alpha-7 (Homo sapiens (Human)).